The following is a 285-amino-acid chain: Phosphate import ATP-binding protein PstB (285 aa).

Positions 39-280 constitute an ABC transporter domain; that stretch reads LEVSDLQLWY…PAKKQTEDYI (242 aa). 71-78 lines the ATP pocket; it reads GPSGCGKS.

It belongs to the ABC transporter superfamily. Phosphate importer (TC 3.A.1.7) family. In terms of assembly, the complex is composed of two ATP-binding proteins (PstB), two transmembrane proteins (PstC and PstA) and a solute-binding protein (PstS).

The protein resides in the cell inner membrane. It carries out the reaction phosphate(out) + ATP + H2O = ADP + 2 phosphate(in) + H(+). Its function is as follows. Part of the ABC transporter complex PstSACB involved in phosphate import. Responsible for energy coupling to the transport system. In Alkalilimnicola ehrlichii (strain ATCC BAA-1101 / DSM 17681 / MLHE-1), this protein is Phosphate import ATP-binding protein PstB.